The primary structure comprises 571 residues: Urease subunit alpha (571 aa).

The region spanning 133-571 is the Urease domain; it reads GGVDSHIHFI…LPLAQRYFLF (439 aa). Residues His138, His140, and Lys221 each coordinate Ni(2+). Lys221 is subject to N6-carboxylysine. His223 is a substrate binding site. His250 and His276 together coordinate Ni(2+). His324 acts as the Proton donor in catalysis. Asp364 lines the Ni(2+) pocket.

The protein belongs to the metallo-dependent hydrolases superfamily. Urease alpha subunit family. Heterotrimer of UreA (gamma), UreB (beta) and UreC (alpha) subunits. Three heterotrimers associate to form the active enzyme. The cofactor is Ni cation. Carboxylation allows a single lysine to coordinate two nickel ions.

The protein localises to the cytoplasm. It carries out the reaction urea + 2 H2O + H(+) = hydrogencarbonate + 2 NH4(+). It functions in the pathway nitrogen metabolism; urea degradation; CO(2) and NH(3) from urea (urease route): step 1/1. This is Urease subunit alpha from Anaeromyxobacter sp. (strain Fw109-5).